Reading from the N-terminus, the 86-residue chain is Large ribosomal subunit protein uL23 (86 aa).

This sequence belongs to the universal ribosomal protein uL23 family. In terms of assembly, part of the 50S ribosomal subunit. Contacts protein L29.

In terms of biological role, binds to 23S rRNA. One of the proteins that surrounds the polypeptide exit tunnel on the outside of the ribosome. The sequence is that of Large ribosomal subunit protein uL23 from Methanococcus vannielii (strain ATCC 35089 / DSM 1224 / JCM 13029 / OCM 148 / SB).